The chain runs to 419 residues: 5-methylthioadenosine/S-adenosylhomocysteine deaminase (419 aa).

Residues His58 and His60 each coordinate Zn(2+). Residues Glu87 and His179 each coordinate substrate. His206 serves as a coordination point for Zn(2+). Substrate contacts are provided by Glu209 and Asp294. Asp294 lines the Zn(2+) pocket.

Belongs to the metallo-dependent hydrolases superfamily. MTA/SAH deaminase family. Zn(2+) is required as a cofactor.

It carries out the reaction S-adenosyl-L-homocysteine + H2O + H(+) = S-inosyl-L-homocysteine + NH4(+). The catalysed reaction is S-methyl-5'-thioadenosine + H2O + H(+) = S-methyl-5'-thioinosine + NH4(+). In terms of biological role, catalyzes the deamination of 5-methylthioadenosine and S-adenosyl-L-homocysteine into 5-methylthioinosine and S-inosyl-L-homocysteine, respectively. Is also able to deaminate adenosine. This chain is 5-methylthioadenosine/S-adenosylhomocysteine deaminase, found in Pyrococcus furiosus (strain ATCC 43587 / DSM 3638 / JCM 8422 / Vc1).